A 510-amino-acid polypeptide reads, in one-letter code: 2,3-bisphosphoglycerate-independent phosphoglycerate mutase (510 aa).

Mn(2+) is bound by residues Asp14 and Ser64. The Phosphoserine intermediate role is filled by Ser64. Substrate-binding positions include His125, Arg155–Asp156, Arg187, Arg193, Arg259–Arg262, and Lys332. 5 residues coordinate Mn(2+): Asp399, His403, Asp440, His441, and His459.

Belongs to the BPG-independent phosphoglycerate mutase family. Monomer. Mn(2+) is required as a cofactor.

It catalyses the reaction (2R)-2-phosphoglycerate = (2R)-3-phosphoglycerate. Its pathway is carbohydrate degradation; glycolysis; pyruvate from D-glyceraldehyde 3-phosphate: step 3/5. Catalyzes the interconversion of 2-phosphoglycerate and 3-phosphoglycerate. Essential for the growth and pathogenicity on the host plant. This Pseudomonas syringae pv. tomato (strain ATCC BAA-871 / DC3000) protein is 2,3-bisphosphoglycerate-independent phosphoglycerate mutase.